The primary structure comprises 138 residues: Large ribosomal subunit protein uL16 (138 aa).

Residues 1–18 (MALMPKRVKHRKSQRGRI) are compositionally biased toward basic residues. A disordered region spans residues 1–21 (MALMPKRVKHRKSQRGRIKGN).

The protein belongs to the universal ribosomal protein uL16 family. Part of the 50S ribosomal subunit.

Its function is as follows. Binds 23S rRNA and is also seen to make contacts with the A and possibly P site tRNAs. In Rhodopirellula baltica (strain DSM 10527 / NCIMB 13988 / SH1), this protein is Large ribosomal subunit protein uL16.